A 367-amino-acid chain; its full sequence is Phosphoribosylaminoimidazole-succinocarboxamide synthase (367 aa).

The protein belongs to the SAICAR synthetase family.

The enzyme catalyses 5-amino-1-(5-phospho-D-ribosyl)imidazole-4-carboxylate + L-aspartate + ATP = (2S)-2-[5-amino-1-(5-phospho-beta-D-ribosyl)imidazole-4-carboxamido]succinate + ADP + phosphate + 2 H(+). Its pathway is purine metabolism; IMP biosynthesis via de novo pathway; 5-amino-1-(5-phospho-D-ribosyl)imidazole-4-carboxamide from 5-amino-1-(5-phospho-D-ribosyl)imidazole-4-carboxylate: step 1/2. This Aliivibrio fischeri (strain MJ11) (Vibrio fischeri) protein is Phosphoribosylaminoimidazole-succinocarboxamide synthase.